We begin with the raw amino-acid sequence, 77 residues long: Cell division topological specificity factor (77 aa).

This sequence belongs to the MinE family.

Functionally, prevents the cell division inhibition by proteins MinC and MinD at internal division sites while permitting inhibition at polar sites. This ensures cell division at the proper site by restricting the formation of a division septum at the midpoint of the long axis of the cell. The polypeptide is Cell division topological specificity factor (Nautilia profundicola (strain ATCC BAA-1463 / DSM 18972 / AmH)).